The primary structure comprises 890 residues: Potassium/sodium hyperpolarization-activated cyclic nucleotide-gated channel 1 (890 aa).

The interval 1 to 93 (MEGGGKPNSS…AEGPRRQYGF (93 aa)) is disordered. The Cytoplasmic portion of the chain corresponds to 1 to 142 (MEGGGKPNSS…WIIHPYSDFR (142 aa)). The segment covering 8-34 (NSSSNSRDDGNSVFPAKASATGAGPAA) has biased composition (low complexity). Residues 62–77 (DGGGGGGGGGGGGEEP) show a composition bias toward gly residues. Residues 143 to 164 (FYWDLIMLIMMVGNLVIIPVGI) form a helical membrane-spanning segment. The Extracellular segment spans residues 165 to 173 (TFFTEQTTT). Residues 174–194 (PWIIFNVASDTVFLLDLIMNF) form a helical membrane-spanning segment. Residues 195–215 (RTGTVNEDSSEIILDPKVIKM) lie on the Cytoplasmic side of the membrane. Residues 216 to 236 (NYLKSWFVVDFISSIPVDYIF) form a helical membrane-spanning segment. Topologically, residues 237–260 (LIVEKGMDSEVYKTARALRIVRFT) are extracellular. A helical; Voltage-sensor membrane pass occupies residues 261 to 281 (KILSLLRLLRLSRLIRYIHQW). At 282-295 (EEIFHMTYDLASAV) the chain is on the cytoplasmic side. Residues 296 to 318 (VRIFNLIGMMLLLCHWDGCLQFL) form a helical membrane-spanning segment. The Extracellular portion of the chain corresponds to 319 to 344 (VPLLQDFPPDCWVSLNEMVNDSWGKQ). The N-linked (GlcNAc...) asparagine glycan is linked to Asn-338. Positions 345–366 (YSYALFKAMSHMLCIGYGAQAP) form an intramembrane region, pore-forming. Positions 358-362 (CIGYG) match the Selectivity filter motif. Residues 367–371 (VSMSD) are Extracellular-facing. A helical transmembrane segment spans residues 372-392 (LWITMLSMIVGATCYAMFVGH). Topologically, residues 393 to 890 (ATALIQSLDS…AEKPRFASNL (498 aa)) are cytoplasmic. Gly-539, Glu-540, Cys-542, Arg-549, Thr-550, Arg-590, and Arg-593 together coordinate 3',5'-cyclic AMP. 2 stretches are compositionally biased toward low complexity: residues 644-691 (MTTL…PQPS) and 731-749 (QQQP…TQPQ). 3 disordered regions span residues 644 to 692 (MTTL…QPSA), 725 to 796 (SQLS…LPHE), and 845 to 890 (MSSG…ASNL). The span at 770-780 (STQALHNTNLT) shows a compositional bias: polar residues. The segment covering 854 to 865 (RGVPPAPPPPAA) has biased composition (pro residues). Positions 880 to 890 (DAEKPRFASNL) are enriched in basic and acidic residues.

It belongs to the potassium channel HCN family. As to quaternary structure, homotetramer. Heterotetramer with HCN2. The potassium channel is composed of a homo- or heterotetrameric complex of pore-forming subunits. Interacts with KCNE2. Interacts with the SH3 domain of CSK. As to expression, detected in brain, in particular in amygdala and hippocampus, while expression in caudate nucleus, corpus callosum, substantia nigra, subthalamic nucleus and thalamus is very low or not detectable. Detected at very low levels in muscle and pancreas.

The protein localises to the cell membrane. It carries out the reaction Na(+)(in) = Na(+)(out). The catalysed reaction is K(+)(in) = K(+)(out). Its activity is regulated as follows. Activated by cAMP, and at 10-100 times higher concentrations, also by cGMP. cAMP binding promotes tetramerization and formation of an active channel. Compared to other family members, cAMP has less stimulatory effect on HCN1 because part of the molecules already contain bound cAMP and form homotetramers when cAMP levels are low, this inherent tetramerization in HCN1 results in a weaker response to increased cAMP. Inhibited by Cs(1+), zatebradine, capsazepine and ZD7288. Functionally, hyperpolarization-activated ion channel that are permeable to sodium and potassium ions. Displays lower selectivity for K(+) over Na(+) ions. Contributes to the native pacemaker currents in heart (If) and in the generation of the I(h) current which controls neuron excitability. Participates in cerebellar mechanisms of motor learning. May mediate responses to sour stimuli. The chain is Potassium/sodium hyperpolarization-activated cyclic nucleotide-gated channel 1 (HCN1) from Homo sapiens (Human).